A 137-amino-acid chain; its full sequence is Putative pumilio homolog 25 (137 aa).

Pumilio repeat units follow at residues 70-105 (EFDS…LPHS) and 108-137 (SVLV…TRLA).

The protein localises to the cytoplasm. Sequence-specific RNA-binding protein that regulates translation and mRNA stability by binding the 3'-UTR of target mRNAs. This is Putative pumilio homolog 25 (APUM25) from Arabidopsis thaliana (Mouse-ear cress).